Here is a 521-residue protein sequence, read N- to C-terminus: Maturase K (521 aa).

The protein belongs to the intron maturase 2 family. MatK subfamily.

It localises to the plastid. Usually encoded in the trnK tRNA gene intron. Probably assists in splicing its own and other chloroplast group II introns. This chain is Maturase K, found in Cuscuta exaltata (Tall dodder).